The primary structure comprises 89 residues: Envelope glycoprotein N (89 aa).

The N-terminal stretch at 1-24 (MAPGRGVLLLICLCLMDNVSQVVC) is a signal peptide. The Virion surface segment spans residues 25–56 (SQNSTTPSKFPTFYSYDCNADTYAPQLTSFST). A helical transmembrane segment spans residues 57–77 (IWTLLNVLVMTIACVIYLIYM). Residues 78 to 89 (CFNKFVATMTNT) are Intravirion-facing.

Belongs to the herpesviridae glycoprotein N family. As to quaternary structure, interacts (via N-terminus) with gM (via N-terminus). The gM-gN heterodimer forms the gCII complex.

It localises to the virion membrane. The protein localises to the host membrane. The protein resides in the host Golgi apparatus. Its subcellular location is the host trans-Golgi network. Its function is as follows. Envelope glycoprotein necessary for proper maturation of gM and modulation of its membrane fusion activity. Also plays a critical role in virion morphogenesis. This Equine herpesvirus 2 (strain 86/87) (EHV-2) protein is Envelope glycoprotein N.